The primary structure comprises 589 residues: Kelch-like protein 25 (589 aa).

The BTB domain occupies Thr-46–Glu-114. One can recognise a BACK domain in the interval Cys-149–Val-250. Kelch repeat units follow at residues Thr-296–Cys-340, Lys-341–Asn-388, Cys-389–Leu-444, Leu-446–Ser-492, Gln-493–Asn-538, and Lys-539–Lys-585.

As to quaternary structure, component of the BCR(KLHL25) E3 ubiquitin ligase complex, at least composed of cul3, klhl25 and rbx1.

It participates in protein modification; protein ubiquitination. Substrate-specific adapter of a BCR (BTB-CUL3-RBX1) E3 ubiquitin ligase complex involved in various processes, such as translation homeostasis and lipid synthesis. The BCR(KLHL25) ubiquitin ligase complex acts by mediating ubiquitination of hypophosphorylated eif4ebp1 (4E-BP1): ubiquitination and subsequent degradation of hypophosphorylated EIF4EBP1 (4E-BP1) probably serves as a homeostatic mechanism to maintain translation and prevent eIF4E inhibition when eIF4E levels are low. The BCR(KLHL25) complex also acts as a regulator of lipid synthesis by mediating ubiquitination and degradation of ACLY, thereby inhibiting lipid synthesis. The protein is Kelch-like protein 25 of Xenopus tropicalis (Western clawed frog).